Reading from the N-terminus, the 303-residue chain is Hydroxyacylglutathione hydrolase, mitochondrial (303 aa).

H97, H99, D101, H102, H153, and D177 together coordinate Zn(2+). Substrate is bound by residues 186 to 188, 216 to 218, and 292 to 295; these read KFF, HEY, and RKEK. Position 216 (H216) interacts with Zn(2+).

This sequence belongs to the metallo-beta-lactamase superfamily. Glyoxalase II family. Monomer. Requires Zn(2+) as cofactor.

It localises to the mitochondrion matrix. The protein localises to the cytoplasm. The catalysed reaction is an S-(2-hydroxyacyl)glutathione + H2O = a 2-hydroxy carboxylate + glutathione + H(+). It carries out the reaction (R)-S-lactoylglutathione + H2O = (R)-lactate + glutathione + H(+). In terms of biological role, thiolesterase that catalyzes the hydrolysis of S-D-lactoyl-glutathione to form glutathione and D-lactic acid. This Danio rerio (Zebrafish) protein is Hydroxyacylglutathione hydrolase, mitochondrial (hagh).